An 891-amino-acid polypeptide reads, in one-letter code: uncharacterized protein (891 aa).

Basic and acidic residues predominate over residues 48 to 64 (GHKKPRSESRKKYDAKK). The tract at residues 48 to 86 (GHKKPRSESRKKYDAKKQHQSSHFATPVKGVESSEPTEK) is disordered. Serine 261, serine 263, serine 265, and serine 268 each carry phosphoserine. The tract at residues 795–822 (QRTFSNESPRAVDSGFSRTSTPFSESTS) is disordered. The span at 810–822 (FSRTSTPFSESTS) shows a compositional bias: polar residues.

The protein localises to the nucleus. This is an uncharacterized protein from Schizosaccharomyces pombe (strain 972 / ATCC 24843) (Fission yeast).